The sequence spans 416 residues: N-acetylmuramoyl-L-alanine amidase AmiC (416 aa).

The first 26 residues, 1-26 (MIKLTRRQIIRRTAGTLFALSPIASA), serve as a signal peptide directing secretion. The tract at residues 166–191 (RGSPEADLAQNTTPQPGRGRNGRRPV) is disordered. The 214-residue stretch at 192–405 (IMLDPGHGGE…CAQSIASGVQ (214 aa)) folds into the MurNAc-LAA domain.

The protein belongs to the N-acetylmuramoyl-L-alanine amidase 3 family.

The protein localises to the periplasm. It carries out the reaction Hydrolyzes the link between N-acetylmuramoyl residues and L-amino acid residues in certain cell-wall glycopeptides.. Its function is as follows. Cell-wall hydrolase involved in septum cleavage during cell division. The chain is N-acetylmuramoyl-L-alanine amidase AmiC (amiC) from Neisseria meningitidis serogroup B (strain ATCC BAA-335 / MC58).